A 345-amino-acid polypeptide reads, in one-letter code: D-fructose 1,6-bisphosphatase class 2/sedoheptulose 1,7-bisphosphatase (345 aa).

Mn(2+)-binding residues include Asp33, Glu57, Asp97, and Glu100. Substrate-binding positions include 100–102 (EGT), Tyr131, 176–178 (RDR), and 198–200 (DGD). Residue Glu225 participates in Mn(2+) binding.

It belongs to the FBPase class 2 family. In terms of assembly, homotetramer. Mn(2+) is required as a cofactor.

The catalysed reaction is beta-D-fructose 1,6-bisphosphate + H2O = beta-D-fructose 6-phosphate + phosphate. The enzyme catalyses D-sedoheptulose 1,7-bisphosphate + H2O = D-sedoheptulose 7-phosphate + phosphate. It participates in carbohydrate biosynthesis; Calvin cycle. Functionally, catalyzes the hydrolysis of fructose 1,6-bisphosphate (Fru 1,6-P2) and sedoheptulose 1,7-bisphosphate (Sed 1,7-P2) to fructose 6-phosphate and sedoheptulose 7-phosphate, respectively. The protein is D-fructose 1,6-bisphosphatase class 2/sedoheptulose 1,7-bisphosphatase of Trichormus variabilis (strain ATCC 29413 / PCC 7937) (Anabaena variabilis).